A 269-amino-acid polypeptide reads, in one-letter code: UPF0354 protein YtpQ (269 aa).

This sequence belongs to the UPF0354 family.

The polypeptide is UPF0354 protein YtpQ (ytpQ) (Bacillus subtilis (strain 168)).